Here is a 776-residue protein sequence, read N- to C-terminus: Isoamylase (776 aa).

An N-terminal signal peptide occupies residues 1–26 (MKCPKILAALLGCAVLAGVPAMPAHA). Residues aspartate 154, glutamate 255, threonine 256, asparagine 258, and aspartate 285 each coordinate Ca(2+). The Nucleophile role is filled by aspartate 401. Cysteine 410 and cysteine 422 are oxidised to a cystine. The active-site Proton donor is glutamate 461. 2 disulfide bridges follow: cysteine 546–cysteine 616 and cysteine 738–cysteine 766.

This sequence belongs to the glycosyl hydrolase 13 family. As to quaternary structure, monomer. It depends on Ca(2+) as a cofactor.

It carries out the reaction Hydrolysis of (1-&gt;6)-alpha-D-glucosidic branch linkages in glycogen, amylopectin and their beta-limit dextrins.. This Pseudomonas sp. (strain SMP1) protein is Isoamylase (iam).